The chain runs to 148 residues: SsrA-binding protein (148 aa).

The segment at 129–148 is disordered; sequence ETEKDRDWQREKARLMREKA.

This sequence belongs to the SmpB family.

Its subcellular location is the cytoplasm. Required for rescue of stalled ribosomes mediated by trans-translation. Binds to transfer-messenger RNA (tmRNA), required for stable association of tmRNA with ribosomes. tmRNA and SmpB together mimic tRNA shape, replacing the anticodon stem-loop with SmpB. tmRNA is encoded by the ssrA gene; the 2 termini fold to resemble tRNA(Ala) and it encodes a 'tag peptide', a short internal open reading frame. During trans-translation Ala-aminoacylated tmRNA acts like a tRNA, entering the A-site of stalled ribosomes, displacing the stalled mRNA. The ribosome then switches to translate the ORF on the tmRNA; the nascent peptide is terminated with the 'tag peptide' encoded by the tmRNA and targeted for degradation. The ribosome is freed to recommence translation, which seems to be the essential function of trans-translation. This Ralstonia nicotianae (strain ATCC BAA-1114 / GMI1000) (Ralstonia solanacearum) protein is SsrA-binding protein.